The following is a 464-amino-acid chain: ATP synthase subunit beta (464 aa).

152–159 (GGAGVGKT) serves as a coordination point for ATP.

The protein belongs to the ATPase alpha/beta chains family. As to quaternary structure, F-type ATPases have 2 components, CF(1) - the catalytic core - and CF(0) - the membrane proton channel. CF(1) has five subunits: alpha(3), beta(3), gamma(1), delta(1), epsilon(1). CF(0) has three main subunits: a(1), b(2) and c(9-12). The alpha and beta chains form an alternating ring which encloses part of the gamma chain. CF(1) is attached to CF(0) by a central stalk formed by the gamma and epsilon chains, while a peripheral stalk is formed by the delta and b chains.

The protein localises to the cell membrane. The enzyme catalyses ATP + H2O + 4 H(+)(in) = ADP + phosphate + 5 H(+)(out). In terms of biological role, produces ATP from ADP in the presence of a proton gradient across the membrane. The catalytic sites are hosted primarily by the beta subunits. The protein is ATP synthase subunit beta of Ureaplasma parvum serovar 3 (strain ATCC 27815 / 27 / NCTC 11736).